Consider the following 151-residue polypeptide: uncharacterized protein (151 aa).

Helical transmembrane passes span 22-42, 62-82, 97-117, and 121-141; these read IVSI…GFFF, ALFI…TKII, LFAF…ADYF, and IYIP…IELA.

It is found in the cell membrane. This is an uncharacterized protein from Bacillus subtilis (strain 168).